The primary structure comprises 92 residues: Small ribosomal subunit protein uS19c (92 aa).

Belongs to the universal ribosomal protein uS19 family.

The protein localises to the plastid. Its subcellular location is the chloroplast. In terms of biological role, protein S19 forms a complex with S13 that binds strongly to the 16S ribosomal RNA. The polypeptide is Small ribosomal subunit protein uS19c (Amborella trichopoda).